A 710-amino-acid polypeptide reads, in one-letter code: Protein-glutamine gamma-glutamyltransferase Z (710 aa).

Catalysis depends on residues Cys279, His338, and Asp361. Residues Asn401, Asp403, Glu450, and Glu455 each contribute to the Ca(2+) site.

The protein belongs to the transglutaminase superfamily. Transglutaminase family. It depends on Ca(2+) as a cofactor. In terms of tissue distribution, widely expressed.

It catalyses the reaction L-glutaminyl-[protein] + L-lysyl-[protein] = [protein]-L-lysyl-N(6)-5-L-glutamyl-[protein] + NH4(+). Functionally, catalyzes the cross-linking of proteins and the conjugation of polyamines to proteins. This is Protein-glutamine gamma-glutamyltransferase Z (TGM7) from Homo sapiens (Human).